Consider the following 253-residue polypeptide: Dehydration-responsive element-binding protein 1D (253 aa).

Residues 1–22 (MEKNTAASGQLMTSSAEATPSS) show a composition bias toward polar residues. Positions 1-31 (MEKNTAASGQLMTSSAEATPSSPKRPAGRTK) are disordered. The segment at residues 39–98 (VFRGVRWRGCAGRWVCKVRVPGSRGDRFWIGTSDTAEETARTHDAAMLALCGASASLNFA) is a DNA-binding region (AP2/ERF). The segment at 131-153 (RRVPAPGRGSTATATATSGDAAS) is disordered. The segment covering 134 to 153 (PAPGRGSTATATATSGDAAS) has biased composition (low complexity).

The protein belongs to the AP2/ERF transcription factor family. ERF subfamily.

The protein localises to the nucleus. In terms of biological role, transcriptional activator that binds specifically to the DNA sequence 5'-[AG]CCGAC-3'. Binding to the C-repeat/DRE element mediates high salinity- and dehydration-inducible transcription. The chain is Dehydration-responsive element-binding protein 1D (DREB1D) from Oryza sativa subsp. indica (Rice).